The chain runs to 179 residues: Large ribosomal subunit protein uL6 (179 aa).

Belongs to the universal ribosomal protein uL6 family. As to quaternary structure, part of the 50S ribosomal subunit.

Its function is as follows. This protein binds to the 23S rRNA, and is important in its secondary structure. It is located near the subunit interface in the base of the L7/L12 stalk, and near the tRNA binding site of the peptidyltransferase center. In Gloeothece citriformis (strain PCC 7424) (Cyanothece sp. (strain PCC 7424)), this protein is Large ribosomal subunit protein uL6.